A 163-amino-acid polypeptide reads, in one-letter code: Calcium-binding protein 2 (163 aa).

Glycine 2 is lipidated: N-myristoyl glycine. 4 EF-hand domains span residues 21–56, 72–89, 95–130, and 132–163; these read EEIEELQAAFQEFDRDRDGYIGYQELGACMRTLGYM, GKVDFEDFVELMGPKLLA, IGVRELRDAFREFDTNGDGCISLGELRAALKALLGE, and LSQREVDEILRDIDLNGDGLVDFEEFVRMMSR. Ca(2+) is bound by residues aspartate 34, aspartate 36, aspartate 38, tyrosine 40, and glutamate 45. Residues aspartate 108, asparagine 110, aspartate 112, cysteine 114, glutamate 119, aspartate 145, asparagine 147, aspartate 149, and glutamate 156 each coordinate Ca(2+).

Its subcellular location is the cytoplasm. It is found in the perinuclear region. The protein resides in the cell membrane. The protein localises to the golgi apparatus. Functionally, required for sound encoding at inner hair cells (IHCs) synapses, likely via inhibition of the inactivation of voltage-gated calcium channel of type 1.3 (Cav1.3) in the IHCs. Required for the normal transfer of light signals through the retina. The sequence is that of Calcium-binding protein 2 (CABP2) from Bos taurus (Bovine).